A 357-amino-acid polypeptide reads, in one-letter code: uncharacterized protein (357 aa).

Residues 6–32 (CIVCRQKKIKCDRKNPCTNCEQAGEKC) constitute a DNA-binding region (zn(2)-C6 fungal-type).

Its subcellular location is the nucleus. This is an uncharacterized protein from Schizosaccharomyces pombe (strain 972 / ATCC 24843) (Fission yeast).